Here is a 513-residue protein sequence, read N- to C-terminus: E3 ubiquitin-protein ligase XBAT33 (513 aa).

ANK repeat units lie at residues 44–73 (GLNS…DVNS), 77–106 (CGQT…NVTR), 111–140 (AGRT…PSDK), 171–200 (GGIT…NVSA), and 214–244 (AGST…KMTL). Residues 312–362 (CAVCLERTCTVAAEGCEHQLCVRCALYLCSSSNVPSVTVGPPGSIPCPLCR) form an RING-type zinc finger. Disordered stretches follow at residues 397–417 (DTTD…SKTR) and 455–483 (HGTE…EEGQ). Basic and acidic residues-rich tracts occupy residues 455 to 466 (HGTERHSEEHVE) and 474 to 483 (TEQEKIEEGQ).

It carries out the reaction S-ubiquitinyl-[E2 ubiquitin-conjugating enzyme]-L-cysteine + [acceptor protein]-L-lysine = [E2 ubiquitin-conjugating enzyme]-L-cysteine + N(6)-ubiquitinyl-[acceptor protein]-L-lysine.. Its pathway is protein modification; protein ubiquitination. In terms of biological role, possesses E3 ubiquitin-protein ligase activity when associated with the E2 enzyme UBC8 in vitro. The sequence is that of E3 ubiquitin-protein ligase XBAT33 (XBAT33) from Arabidopsis thaliana (Mouse-ear cress).